The sequence spans 281 residues: Survival motor neuron protein 1 (281 aa).

2 disordered regions span residues 1 to 20 and 42 to 77; these read MANG…SDDS and ALKG…NAAP. Thr-14 bears the Phosphothreonine mark. Ser-17 and Ser-20 each carry phosphoserine. The span at 59–73 shows a compositional bias: basic residues; that stretch reads KKRKNNKKNKSRKRC. The Tudor domain occupies 80-140; it reads EWQVGDSCYA…LTEPPDMDED (61 aa). The segment covering 145–159 has biased composition (basic and acidic residues); it reads ANVKETESSTEESDR. Residues 145–242 are disordered; that stretch reads ANVKETESST…PMSPDFGEDD (98 aa). Composition is skewed to pro residues over residues 179–197 and 212–235; these read MGPP…PPPP and PSFP…PPMS. The segment at 225-252 is P2 (binding site for SNRPB); sequence PPMIPPPPPMSPDFGEDDEALGSMLISW. A required for interaction with SYNCRIP region spans residues 264-279; that stretch reads GLRQGRKEAAASKKSH.

The protein belongs to the SMN family. In terms of assembly, homodimer. Component of an import snRNP complex composed of kpnb1, rnut1, smn1 and znf259. Part of the core SMN complex that contains smn1, gemin2/sip1, ddx20/gemin3, gemin4, gemin5, gemin6, gemin7, gemin8 and strap/unrip. Interacts with ddx20, fbl, nola1, rnut1, syncrip and with several spliceosomal snRNP core Sm proteins, including snrpb, snrpd1, snrpd2, snrpd3, snrpe and ilf3. Interacts with elavl4.

Its subcellular location is the nucleus. The protein resides in the gem. It is found in the cajal body. The protein localises to the cytoplasm. It localises to the cytoplasmic granule. Its subcellular location is the perikaryon. The protein resides in the cell projection. It is found in the neuron projection. The protein localises to the myofibril. It localises to the sarcomere. Its subcellular location is the z line. Its function is as follows. The SMN complex plays an essential role in spliceosomal snRNP assembly in the cytoplasm and is required for pre-mRNA splicing in the nucleus. It may also play a role in the metabolism of snoRNPs. Required in motor neurons and proprioceptive neurons to ensure correct U12 intron splicing and proper levels of tmem41b mRNA. Required for the maturation of motor neuron axonal branches and dendrites. The sequence is that of Survival motor neuron protein 1 (smn1) from Danio rerio (Zebrafish).